The sequence spans 145 residues: Basic phospholipase A2 PC10 (145 aa).

The signal sequence occupies residues 1-21 (MYPAHLLLLLAVCVSLLGASA). The propeptide occupies 22–27 (IPPLPL). Disulfide bonds link C38-C98, C54-C144, C56-C72, C71-C125, C78-C118, C87-C111, and C105-C116. The Ca(2+) site is built by Y55, G57, and G59. The active site involves H75. D76 contacts Ca(2+). D119 is an active-site residue.

The protein belongs to the phospholipase A2 family. Group I subfamily. D49 sub-subfamily. The cofactor is Ca(2+).

The protein localises to the secreted. The catalysed reaction is a 1,2-diacyl-sn-glycero-3-phosphocholine + H2O = a 1-acyl-sn-glycero-3-phosphocholine + a fatty acid + H(+). In terms of biological role, PLA2 catalyzes the calcium-dependent hydrolysis of the 2-acyl groups in 3-sn-phosphoglycerides. The chain is Basic phospholipase A2 PC10 from Laticauda laticaudata (Blue-ringed sea krait).